The sequence spans 159 residues: MVCSRGIFGIDIMNKKGIDSLFVSALYYSINKAIYDVMGDGGKVLGRRASYEMIKLLKDLGFIKENMSNEEIKNLFVNTFGLSEDLNIVEEDKKVIFEVINPTLDLFLKKLMEENLKPYVCPFMYLLSEIYSVSNNCRLMLSDVVPETEEKVKLIFKKV.

This is an uncharacterized protein from Methanocaldococcus jannaschii (strain ATCC 43067 / DSM 2661 / JAL-1 / JCM 10045 / NBRC 100440) (Methanococcus jannaschii).